The following is a 64-amino-acid chain: PYLa/PGLa A (64 aa).

A signal peptide spans 1–20 (MYKQIFLCLIIAALCATIMA). The propeptide occupies 21–35 (EASAFADADEDDDKR). Leu59 carries the leucine amide modification. A propeptide spanning residues 60–64 (GRRDS) is cleaved from the precursor.

It belongs to the gastrin/cholecystokinin family. Magainin subfamily. In terms of tissue distribution, expressed by the skin glands. Synthesized in the stomach and stored in a novel granular multinucleated cell in the gastric mucosa. Stored as active, processed peptides in large granules within the granular gland secretions of the skin.

It is found in the secreted. Functionally, PGLa and PGLa-H display a broad-spectrum of antibacterial activity against a range of Gram-positive and Gram-negative bacteria. PGLa also displays antifungal activity against C.albicans ATCC 14053. PGLa-H shows moderate antibacterial activity against the multidrug-resistant methicillin-resistant S.aureus (MRSA) but exhibits very little hemolytic activity. This is PYLa/PGLa A (pgla-a) from Xenopus laevis (African clawed frog).